The following is a 364-amino-acid chain: UDP-N-acetylglucosamine--N-acetylmuramyl-(pentapeptide) pyrophosphoryl-undecaprenol N-acetylglucosamine transferase (364 aa).

UDP-N-acetyl-alpha-D-glucosamine-binding positions include 10 to 12 (TGG), Asn124, Arg166, Ser196, and Gln297.

This sequence belongs to the glycosyltransferase 28 family. MurG subfamily.

The protein localises to the cell membrane. It carries out the reaction di-trans,octa-cis-undecaprenyl diphospho-N-acetyl-alpha-D-muramoyl-L-alanyl-D-glutamyl-meso-2,6-diaminopimeloyl-D-alanyl-D-alanine + UDP-N-acetyl-alpha-D-glucosamine = di-trans,octa-cis-undecaprenyl diphospho-[N-acetyl-alpha-D-glucosaminyl-(1-&gt;4)]-N-acetyl-alpha-D-muramoyl-L-alanyl-D-glutamyl-meso-2,6-diaminopimeloyl-D-alanyl-D-alanine + UDP + H(+). Its pathway is cell wall biogenesis; peptidoglycan biosynthesis. In terms of biological role, cell wall formation. Catalyzes the transfer of a GlcNAc subunit on undecaprenyl-pyrophosphoryl-MurNAc-pentapeptide (lipid intermediate I) to form undecaprenyl-pyrophosphoryl-MurNAc-(pentapeptide)GlcNAc (lipid intermediate II). The sequence is that of UDP-N-acetylglucosamine--N-acetylmuramyl-(pentapeptide) pyrophosphoryl-undecaprenol N-acetylglucosamine transferase from Caldanaerobacter subterraneus subsp. tengcongensis (strain DSM 15242 / JCM 11007 / NBRC 100824 / MB4) (Thermoanaerobacter tengcongensis).